A 567-amino-acid chain; its full sequence is TPR repeat-containing protein MJ1428 (567 aa).

13 TPR repeats span residues 14–47, 48–81, 83–115, 116–148, 150–183, 199–234, 236–268, 269–301, 303–335, 344–379, 380–412, 414–446, and 505–538; these read YEDWVTEANYYLDEGIYDKAVECYLKALEKKNTN, PIDWFNLAYALYHLEKYDSALEAINEALKISPSN, YFAYLKGLIHYKRGEIILAYKYLKKASEKIKNE, ELFEILGDISVKYGRYEEALKYYLKSYKMANSK, LNALFKAGKIYLLFGDIDKAYDAFNEILQQNPSH, INSYEDLNNGLTMIKNKDYIGALKIFNKVLQIDENS, ISYYYKSVIAEIFEEYKKALEYIDKSISIFNRS, LYYAKKGDILYKLGDEEGAIEAYNKAIKLNSQN, YAYFGLAILYYRKGELEKSSNFFDKVLETYLEE, LNLYSLIGKAETTGIPKYYHEAMKYVDNLINLENSS, RWWYVKGYIYYKLGNYKDAYESFMNALRVNPKD, STLKSLAIVLEKSGKIDEAITTYTKILKIVNSL, and AYIYLSFIESYISLDEISQMVNDIKSKLSLEMYR.

This chain is TPR repeat-containing protein MJ1428, found in Methanocaldococcus jannaschii (strain ATCC 43067 / DSM 2661 / JAL-1 / JCM 10045 / NBRC 100440) (Methanococcus jannaschii).